Consider the following 561-residue polypeptide: FAD-binding monooxygenase tazF (561 aa).

FAD contacts are provided by residues Thr-74–Asp-77, Asp-86–Ile-87, and Tyr-92. NADP(+) is bound at residue Gly-84–Asp-86. NADP(+)-binding positions include Asn-212 to Gln-218 and Arg-235 to His-236.

Belongs to the FAD-binding monooxygenase family. FAD serves as cofactor.

Its pathway is secondary metabolite biosynthesis. FAD-binding monooxygenase; part of the gene cluster that mediates the biosynthesis of azaterrilone A and other azaphilones, a class of fungal metabolites characterized by a highly oxygenated pyrano-quinone bicyclic core and exhibiting a broad range of bioactivities. The first step of the pathway begins with the non-reducing polyketide synthase tazA that assembles one acetyl-CoA starter unit, five malonyl-CoA units, and catalyzes a series of Claisen condensations, methylation, PT-mediated cyclization, and finally releases the first hexaketide precursor through the R-domain. The tazA product then undergoes reduction on its terminal ketone and the following pyran-ring formation by yet undetermined enzyme(s). Dehydration and enoyl reduction, possibly involving the trans-enoyl reductase tazE leads to the next intermediate. TazD is predicted as an acetyltransferase and might catalyze the acetylation steps leading to the synthesis of azaterrilone A. Azaterrilone A is not the final product of the taz pathway and both the highly reducing polyketide synthase tazB and the dual enzyme tazHJ catalyze late steps of the pathway, leading to the production of the 2 final stereoisomers that contain additional polyketide modification whose structures have still to be determined. The protein is FAD-binding monooxygenase tazF of Aspergillus terreus (strain NIH 2624 / FGSC A1156).